The primary structure comprises 386 residues: 5-hydroxytryptamine receptor 1B (386 aa).

At 1-42 the chain is on the extracellular side; the sequence is MEEQGIQCAPPPPAASQTGVPLVNLSHNCSAESHIYQDSIAL. N-linked (GlcNAc...) asparagine glycosylation is found at Asn-24 and Asn-28. Residues 43-68 form a helical membrane-spanning segment; it reads PWKVLLVALLALITLATTLSNAFVIA. Residues 69 to 82 lie on the Cytoplasmic side of the membrane; it reads TVYRTRKLHTPANY. Residues 83 to 107 form a helical membrane-spanning segment; the sequence is LIASLAVTDLLVSILVMPVSTMYTV. Topologically, residues 108–115 are extracellular; that stretch reads TGRWTLGQ. A helical membrane pass occupies residues 116 to 141; it reads VVCDFWLSSDITCCTASIMHLCVIAL. Cys-118 and Cys-195 are disulfide-bonded. Ergotamine contacts are provided by Asp-125 and Thr-130. The short motif at 142 to 144 is the DRY motif; important for ligand-induced conformation changes and signaling element; the sequence is DRY. Residues 142 to 161 lie on the Cytoplasmic side of the membrane; that stretch reads DRYWAITDAVEYAAKRTPKR. A helical transmembrane segment spans residues 162-180; the sequence is AAIMIALVWVFSISISLPP. The Extracellular segment spans residues 181–201; that stretch reads FFWRQAKAEEEVLTCLVNTDH. Val-197 serves as a coordination point for ergotamine. A helical transmembrane segment spans residues 202–225; sequence VLYTVYSTGGAFYLPTLLLIALYG. The Cytoplasmic portion of the chain corresponds to 226–311; the sequence is RIYVEARSRI…AARERKATKT (86 aa). Over residues 255–268 the composition is skewed to polar residues; the sequence is DSPGSTTSVTSINS. Positions 255–278 are disordered; sequence DSPGSTTSVTSINSRAPDLPSESG. The helical transmembrane segment at 312–333 threads the bilayer; it reads LGIILGAFIVCWLPFFIISLVM. Residues 334-343 lie on the Extracellular side of the membrane; the sequence is PICKDACWFH. Residues 344-366 traverse the membrane as a helical segment; the sequence is MATLDFFNWLGYLNSLINPIIYT. Positions 361-365 match the NPxxY motif; important for ligand-induced conformation changes and signaling motif; the sequence is NPIIY. Residues 367 to 386 lie on the Cytoplasmic side of the membrane; the sequence is MSNEDFKQAFHKLIRFKCAG. Residue Cys-384 is the site of S-palmitoyl cysteine attachment.

It belongs to the G-protein coupled receptor 1 family. In terms of assembly, homodimer. Heterodimer with HTR1D. Phosphorylated. Desensitization of the receptor may be mediated by its phosphorylation. In terms of processing, palmitoylated.

It localises to the cell membrane. Its function is as follows. G-protein coupled receptor for 5-hydroxytryptamine (serotonin). Also functions as a receptor for ergot alkaloid derivatives, various anxiolytic and antidepressant drugs and other psychoactive substances, such as lysergic acid diethylamide (LSD). Ligand binding causes a conformation change that triggers signaling via guanine nucleotide-binding proteins (G proteins) and modulates the activity of downstream effectors, such as adenylate cyclase. HTR1B is coupled to G(i)/G(o) G alpha proteins and mediates inhibitory neurotransmission by inhibiting adenylate cyclase activity. Arrestin family members inhibit signaling via G proteins and mediate activation of alternative signaling pathways. Regulates the release of 5-hydroxytryptamine, dopamine and acetylcholine in the brain, and thereby affects neural activity, nociceptive processing, pain perception, mood and behavior. Besides, plays a role in vasoconstriction of cerebral arteries. This is 5-hydroxytryptamine receptor 1B (HTR1B) from Cricetulus griseus (Chinese hamster).